The chain runs to 201 residues: MBF complex negative regulatory component yox1 (201 aa).

Polar residues predominate over residues 1 to 22 (MSLSDSPSKSGNTGKDLISNNE). The segment at 1 to 42 (MSLSDSPSKSGNTGKDLISNNEAKNHEDEETHQKKRRRRTTD) is disordered. Residues 23–32 (AKNHEDEETH) show a composition bias toward basic and acidic residues. The segment at residues 33 to 92 (QKKRRRRTTDAEATLLEQYFLKTPKPSLIERQELSKKLKSSMTPRELQIWFQNKRQSLRR) is a DNA-binding region (homeobox).

Component of the MBF transcription factor complex. In terms of processing, phosphorylated in response to hydroxyurea. Phosphorylation inhibits the repressor activity and is dependent on rad3. However, the regulation of yox1 by rad3 is probably indirect.

The protein resides in the nucleus. In terms of biological role, negative regulatory component of the MBF transcription factor complex involved in cell-cycle G1/S phase-specific gene expression and more particularly DNA replication checkpoint-dependent gene expression. In Schizosaccharomyces pombe (strain 972 / ATCC 24843) (Fission yeast), this protein is MBF complex negative regulatory component yox1 (yox1).